A 1063-amino-acid chain; its full sequence is MTNFKFSLLACSIAFALNASIAYAAQPTNQPTNQPTNQPTNQPTNQPTNQPTNQNSNVSEQLEQINVSGSSENINVKEKKVGETQISAKKLAKQQASDSRDLVRYETGITVVETGRTGASGYAVRGVDENRVGIMVDGLRQAETLSSQGFKELFEGYGNFNNTRNSIEIENVKTATITKGADSLKSGSGALGGSVIFETKDARDYLIDKDYYLSYKRGYQTMNNQNLKTLTLAGRSKKFDILIIDTTRDGHEIENYDYKIYPNKQADLRAVGPTREKADPYQITRQSTLIKLGFQPNENHRLSVALDDSTLETKGIDLSYALRPYSTANNEKYGERIINDQSKRKNIQFSYENFSQTPFWDHIKLSYSSQKITNKARSDEYCHQSTCNGVSNPQGLHLVEEKGVYKIKDKYGGELESKEIGWSHEFKNSKGEDADKDISQRSSLDSVLINCEKLDCSKKFRIYQEYDENSSEKYTYDDREIEVGTLPNGKKYGKIPLKKGKTPSWNGFPQETARFLFPKSYGYSTDFVNDRDLNTHTQQIKLDLDKEFHLWHTQHQLKYGGLYEKTLKSMVNHQYNTAANVQWWADYFFCARAKGGNLGEKKTPHPNVSVAGCVNGTPLHSDIGKDTYLIPVTTKNNVLYFGDNVQLTSWLGLDLNYRYDHVKYLPGYDEKTPVPGGLIAGIFVPFNEKDVVYGAYVPSGYKDCRYNTECYKKNFEENLALLLRKTDYKHHSYNLGLNLDPTDWLRVQLKYANAFRAPTSDEIYMTFKHPDFSIGPNTNLKAETAKTKEVAFTFYKENSYLTLSAFQSDYRNFIDLVFEKNKQIDKGSAIEYPFYQNQNRDQARVRGIEIASRLEMGDLFEKLQGFHLGYKLTYQKGRIKDNKLRSGYAEFLKLNPQYTAIASQDQPMNALQPTTSVYNIGYDAPSKKWGMDVYITDVAAKKAKDSFNSQWTSMVKRKENIYGTERTVPATQANGKDVKDSRGLWRNNRYTVIDTIAYWKPIKNLTFTAGVYNLTNKKYLTWDSARSVRHLGTINRVETATGKGLNRFYAPGRNYRMSVQFEF.

The signal sequence occupies residues 1-24 (MTNFKFSLLACSIAFALNASIAYA). Tandem repeats lie at residues 26–29 (QPTN), 30–33 (QPTN), 34–37 (QPTN), 38–41 (QPTN), 42–45 (QPTN), 46–49 (QPTN), and 50–53 (QPTN). A 7 X 4 AA tandem repeats of Q-P-T-N region spans residues 26 to 53 (QPTNQPTNQPTNQPTNQPTNQPTNQPTN). Residues 28 to 55 (TNQPTNQPTNQPTNQPTNQPTNQPTNQN) are compositionally biased toward low complexity. Residues 28–57 (TNQPTNQPTNQPTNQPTNQPTNQPTNQNSN) form a disordered region. The TonB box signature appears at 63–70 (EQINVSGS). The 135-residue stretch at 66–200 (NVSGSSENIN…LGGSVIFETK (135 aa)) folds into the TBDR plug domain. Positions 208–1063 (DKDYYLSYKR…NYRMSVQFEF (856 aa)) constitute a TBDR beta-barrel domain. Residues 1046–1063 (NRFYAPGRNYRMSVQFEF) carry the TonB C-terminal box motif.

Belongs to the TonB-dependent receptor family. Hemoglobin/haptoglobin binding protein subfamily.

Its subcellular location is the cell outer membrane. Functionally, acts as a receptor for hemoglobin or the hemoglobin/haptoglobin complex of the human host and is required for heme uptake. This is Probable hemoglobin and hemoglobin-haptoglobin-binding protein 1 from Haemophilus influenzae (strain ATCC 51907 / DSM 11121 / KW20 / Rd).